Here is a 47-residue protein sequence, read N- to C-terminus: Large ribosomal subunit protein bL34 (47 aa).

Belongs to the bacterial ribosomal protein bL34 family.

In Mycobacterium leprae (strain TN), this protein is Large ribosomal subunit protein bL34 (rpmH).